An 88-amino-acid polypeptide reads, in one-letter code: EMBRYO SURROUNDING FACTOR 1-like protein 7 (88 aa).

The N-terminal stretch at 1 to 22 (MKSSHIALICIVMFSLFALHES) is a signal peptide. 4 cysteine pairs are disulfide-bonded: cysteine 41/cysteine 57, cysteine 46/cysteine 85, cysteine 55/cysteine 81, and cysteine 58/cysteine 68.

This sequence belongs to the MEG family. Expressed in leaves and flowers.

This Arabidopsis thaliana (Mouse-ear cress) protein is EMBRYO SURROUNDING FACTOR 1-like protein 7 (ESFL7).